Here is a 471-residue protein sequence, read N- to C-terminus: UDP-glycosyltransferase CGT (471 aa).

His24 serves as the catalytic Proton acceptor. His24 contacts an anthocyanidin. Asp120 (charge relay) is an active-site residue. Thr143 is a UDP-alpha-D-glucose binding site. A UDP region spans residues 280–281 (SR). UDP-alpha-D-glucose contacts are provided by Val343, Gln345, His360, Trp363, Asn364, Ser365, and Glu368. An anthocyanidin is bound at residue Gly383. Positions 384 and 385 each coordinate UDP-alpha-D-glucose.

It belongs to the UDP-glycosyltransferase family.

The catalysed reaction is a 3'-hydro-2'-hydroxy-beta-oxodihydrochalcone + UDP-alpha-D-glucose = a 3'-(beta-D-glucopyranosyl)-2'-hydroxy-beta-oxodihydrochalcone + UDP + H(+). In terms of biological role, UDP-glucose-dependent glucosyltransferase catalyzing the c-glucosylation of 2-hydroxyflavanones. The sequence is that of UDP-glycosyltransferase CGT from Oryza sativa subsp. japonica (Rice).